The primary structure comprises 406 residues: Putative nickel insertion protein (406 aa).

It belongs to the LarC family.

This chain is Putative nickel insertion protein, found in Thermomicrobium roseum (strain ATCC 27502 / DSM 5159 / P-2).